Reading from the N-terminus, the 121-residue chain is Small ribosomal subunit protein uS13 (121 aa).

The interval 91-121 (HRKGLPMRGQRTRTNARTRKGPRKAGVALKK) is disordered.

This sequence belongs to the universal ribosomal protein uS13 family. Part of the 30S ribosomal subunit. Forms a loose heterodimer with protein S19. Forms two bridges to the 50S subunit in the 70S ribosome.

Located at the top of the head of the 30S subunit, it contacts several helices of the 16S rRNA. In the 70S ribosome it contacts the 23S rRNA (bridge B1a) and protein L5 of the 50S subunit (bridge B1b), connecting the 2 subunits; these bridges are implicated in subunit movement. Contacts the tRNAs in the A and P-sites. The chain is Small ribosomal subunit protein uS13 from Cupriavidus necator (strain ATCC 17699 / DSM 428 / KCTC 22496 / NCIMB 10442 / H16 / Stanier 337) (Ralstonia eutropha).